Consider the following 898-residue polypeptide: DNA damage-induced apoptosis suppressor protein (898 aa).

Disordered stretches follow at residues Cys-191–Leu-210, Ser-643–Ser-670, and Tyr-710–Ser-749. Polar residues-rich tracts occupy residues Ser-643–Ser-664 and Tyr-710–Leu-725. Positions Gln-726 to Asp-741 are enriched in low complexity.

As to expression, highly expressed in the testis, spleen and heart. Expressed at high levels in the primary spermatocytes and to a lesser extent in the round spermatids. Also found in the bone marrow, brain, lung, kidney and liver.

The protein localises to the cytoplasm. Its subcellular location is the nucleus. May be an anti-apoptotic protein involved in DNA repair or cell survival. This Mus musculus (Mouse) protein is DNA damage-induced apoptosis suppressor protein (Ddias).